The primary structure comprises 157 residues: Thiosulfate sulfurtransferase/rhodanese-like domain-containing protein 3 (157 aa).

Positions 52-154 constitute a Rhodanese domain; sequence NSKDIMLIDV…WVTYEISEEK (103 aa). Residue Lys-96 is modified to N6-succinyllysine. The active-site Cysteine persulfide intermediate is the Cys-114.

In Mus musculus (Mouse), this protein is Thiosulfate sulfurtransferase/rhodanese-like domain-containing protein 3 (Tstd3).